The sequence spans 459 residues: GTPase Der (459 aa).

2 consecutive EngA-type G domains span residues 3-167 and 188-363; these read FTLA…PEPV and IRVA…AVWN. GTP-binding positions include 9 to 16, 56 to 60, 119 to 122, 194 to 201, 241 to 245, and 306 to 309; these read GRPNVGKS, DTAGL, NKSE, GRPNAGKS, and NKWD. Positions 364 to 448 constitute a KH-like domain; that stretch reads RRVPTAALNR…PVRITLREKA (85 aa).

This sequence belongs to the TRAFAC class TrmE-Era-EngA-EngB-Septin-like GTPase superfamily. EngA (Der) GTPase family. Associates with the 50S ribosomal subunit.

Its function is as follows. GTPase that plays an essential role in the late steps of ribosome biogenesis. This Rhodopseudomonas palustris (strain TIE-1) protein is GTPase Der.